A 326-amino-acid polypeptide reads, in one-letter code: Probable cell division protein WhiA (326 aa).

Positions 275 to 308 form a DNA-binding region, H-T-H motif; the sequence is SLDELGHHADPPMTKDAVAGRIRRLLAMADKKAV.

This sequence belongs to the WhiA family.

Its function is as follows. Involved in cell division and chromosome segregation. The chain is Probable cell division protein WhiA from Clavibacter michiganensis subsp. michiganensis (strain NCPPB 382).